Reading from the N-terminus, the 458-residue chain is NADH-ubiquinone oxidoreductase chain 4 (458 aa).

The next 13 helical transmembrane spans lie at 23–43 (LLWTATTFFSFLIAALSTLTL), 59–79 (IDQFSCPLIMLSCWLLPLTIM), 99–119 (LLILLQVLLCITFGASNLLMF), 148–168 (LYFLFYTLSASLPLLLALIMI), 174–194 (SLSIYIIPLSNLTLLLNTPWS), 197–217 (LWWIACFLAFLIKMPLYIFHL), 227–247 (PIAGSMILAAILLKLGGYGMI), 260–280 (LAVPFMIIAMWGMIVTSSICL), 289–311 (IAYSSVSHMGLVVAGIFTMTPWA), 315–337 (ALAMMIAHGLVSSGLLCLANITY), 355–375 (FPLMSFWWLMMTFANMALPPF), 396–416 (ILLLGLSMTLTALFSLNMLIM), and 438–458 (LMLMHMAPIILLIANPSAIMI).

Belongs to the complex I subunit 4 family.

The protein resides in the mitochondrion membrane. It carries out the reaction a ubiquinone + NADH + 5 H(+)(in) = a ubiquinol + NAD(+) + 4 H(+)(out). Core subunit of the mitochondrial membrane respiratory chain NADH dehydrogenase (Complex I) that is believed to belong to the minimal assembly required for catalysis. Complex I functions in the transfer of electrons from NADH to the respiratory chain. The immediate electron acceptor for the enzyme is believed to be ubiquinone. The chain is NADH-ubiquinone oxidoreductase chain 4 (MT-ND4) from Petromyzon marinus (Sea lamprey).